Here is a 419-residue protein sequence, read N- to C-terminus: Serine/threonine-protein kinase Kist (419 aa).

The Protein kinase domain occupies 23-304 (WQVQSRLGSG…AEMALCSPFF (282 aa)). Residues 29 to 37 (LGSGSSASV) and Lys54 each bind ATP. Catalysis depends on proton acceptor residues Asp141 and Asp158. One can recognise an RRM domain in the interval 324-406 (RLLNVLDDDY…KFVVATFYPL (83 aa)).

It belongs to the protein kinase superfamily. Ser/Thr protein kinase family. In terms of assembly, interacts with stathmin and CDKN1B/p27Kip1 Interacts with PAM. In the embryo, preferentially expressed in the developing nervous system.

It is found in the cytoplasm. It localises to the nucleus. It carries out the reaction L-seryl-[protein] + ATP = O-phospho-L-seryl-[protein] + ADP + H(+). The enzyme catalyses L-threonyl-[protein] + ATP = O-phospho-L-threonyl-[protein] + ADP + H(+). In terms of biological role, upon serum stimulation, phosphorylates CDKN1B/p27Kip1, thus controlling CDKN1B subcellular location and cell cycle progression in G1 phase. May be involved in trafficking and/or processing of RNA. The chain is Serine/threonine-protein kinase Kist (Uhmk1) from Rattus norvegicus (Rat).